The primary structure comprises 426 residues: UDP-N-acetylglucosamine--N-acetylmuramyl-(pentapeptide) pyrophosphoryl-undecaprenol N-acetylglucosamine transferase (426 aa).

Residues Thr28 to Gly30, Asn140, Arg176, Ser204, Ile257, and Gln302 contribute to the UDP-N-acetyl-alpha-D-glucosamine site. Residues Ala369–Arg388 form a disordered region.

The protein belongs to the glycosyltransferase 28 family. MurG subfamily.

It is found in the cell inner membrane. It catalyses the reaction di-trans,octa-cis-undecaprenyl diphospho-N-acetyl-alpha-D-muramoyl-L-alanyl-D-glutamyl-meso-2,6-diaminopimeloyl-D-alanyl-D-alanine + UDP-N-acetyl-alpha-D-glucosamine = di-trans,octa-cis-undecaprenyl diphospho-[N-acetyl-alpha-D-glucosaminyl-(1-&gt;4)]-N-acetyl-alpha-D-muramoyl-L-alanyl-D-glutamyl-meso-2,6-diaminopimeloyl-D-alanyl-D-alanine + UDP + H(+). Its pathway is cell wall biogenesis; peptidoglycan biosynthesis. Functionally, cell wall formation. Catalyzes the transfer of a GlcNAc subunit on undecaprenyl-pyrophosphoryl-MurNAc-pentapeptide (lipid intermediate I) to form undecaprenyl-pyrophosphoryl-MurNAc-(pentapeptide)GlcNAc (lipid intermediate II). In Xanthomonas axonopodis pv. citri (strain 306), this protein is UDP-N-acetylglucosamine--N-acetylmuramyl-(pentapeptide) pyrophosphoryl-undecaprenol N-acetylglucosamine transferase.